The primary structure comprises 523 residues: Alpha,alpha-trehalose-phosphate synthase [UDP-forming] (523 aa).

Residues Y98 and D152 each coordinate D-glucose 6-phosphate. The UDP site is built by R288 and K293. Positions 288 and 293 each coordinate UDP-alpha-D-glucose. Residue R326 coordinates D-glucose 6-phosphate. 387–395 (DGMNLVSYE) provides a ligand contact to UDP-alpha-D-glucose. A UDP-binding site is contributed by 391-395 (LVSYE). Residues 503-523 (QQFNLGEQREEGRLEPGEFDD) form a disordered region. Residues 509 to 523 (EQREEGRLEPGEFDD) are compositionally biased toward basic and acidic residues.

The protein belongs to the glycosyltransferase 20 family.

It carries out the reaction D-glucose 6-phosphate + UDP-alpha-D-glucose = alpha,alpha-trehalose 6-phosphate + UDP + H(+). Its pathway is carbohydrate biosynthesis. Functionally, synthase catalytic subunit of the trehalose synthase complex that catalyzes the production of trehalose from glucose-6-phosphate and UDP-alpha-D-glucose in a two step process. The disaccharide trehalose serves as a storage carbohydrate that is mobilized during conidial germination. Trehalose also serves as a protectant for cell integrity during stress. This is Alpha,alpha-trehalose-phosphate synthase [UDP-forming] from Botryotinia fuckeliana (strain B05.10) (Noble rot fungus).